We begin with the raw amino-acid sequence, 382 residues long: Queuine tRNA-ribosyltransferase (382 aa).

The Proton acceptor role is filled by D93. Residues 93 to 97, D147, Q191, and G218 contribute to the substrate site; that span reads DSGGF. An RNA binding region spans residues 249-255; that stretch reads GVGKPED. The Nucleophile role is filled by D268. The tract at residues 273-277 is RNA binding; important for wobble base 34 recognition; the sequence is TRNAR. The Zn(2+) site is built by C306, C308, C311, and H337.

The protein belongs to the queuine tRNA-ribosyltransferase family. As to quaternary structure, homodimer. Within each dimer, one monomer is responsible for RNA recognition and catalysis, while the other monomer binds to the replacement base PreQ1. Zn(2+) is required as a cofactor.

The enzyme catalyses 7-aminomethyl-7-carbaguanine + guanosine(34) in tRNA = 7-aminomethyl-7-carbaguanosine(34) in tRNA + guanine. Its pathway is tRNA modification; tRNA-queuosine biosynthesis. Its function is as follows. Catalyzes the base-exchange of a guanine (G) residue with the queuine precursor 7-aminomethyl-7-deazaguanine (PreQ1) at position 34 (anticodon wobble position) in tRNAs with GU(N) anticodons (tRNA-Asp, -Asn, -His and -Tyr). Catalysis occurs through a double-displacement mechanism. The nucleophile active site attacks the C1' of nucleotide 34 to detach the guanine base from the RNA, forming a covalent enzyme-RNA intermediate. The proton acceptor active site deprotonates the incoming PreQ1, allowing a nucleophilic attack on the C1' of the ribose to form the product. After dissociation, two additional enzymatic reactions on the tRNA convert PreQ1 to queuine (Q), resulting in the hypermodified nucleoside queuosine (7-(((4,5-cis-dihydroxy-2-cyclopenten-1-yl)amino)methyl)-7-deazaguanosine). The chain is Queuine tRNA-ribosyltransferase from Haemophilus influenzae (strain PittEE).